Consider the following 187-residue polypeptide: Elongation factor P (187 aa).

Belongs to the elongation factor P family.

It localises to the cytoplasm. It functions in the pathway protein biosynthesis; polypeptide chain elongation. Functionally, involved in peptide bond synthesis. Stimulates efficient translation and peptide-bond synthesis on native or reconstituted 70S ribosomes in vitro. Probably functions indirectly by altering the affinity of the ribosome for aminoacyl-tRNA, thus increasing their reactivity as acceptors for peptidyl transferase. The sequence is that of Elongation factor P from Mycobacterium leprae (strain Br4923).